We begin with the raw amino-acid sequence, 293 residues long: MAAITASMVAELRAKTDAPMMECKKALTEADGDMARAEELLRVKLGNKASKAASRVTAEGVVASFIGGNAGSLVELNCETDFVSKNDDFLGFSKKVAELVATQNPADVAALAALPLDGSTVDAVRLALVGKIGENLSIRRFVRFETSNKLAAYLHGTRIGVLVEYTGADEQVGKDVAMHIAAMKPVSLSSDDVPADLIAKERSIAEQKAAESGKPAEIVAKMVEGSVQKYLKEVSLLNQTFVKNDKQTIEQMLKAGNSSVQKFALFVVGEGIEKKQDDFAAEVAAQVAAAKQQ.

The segment at T80–V83 is involved in Mg(2+) ion dislocation from EF-Tu.

It belongs to the EF-Ts family.

Its subcellular location is the cytoplasm. Associates with the EF-Tu.GDP complex and induces the exchange of GDP to GTP. It remains bound to the aminoacyl-tRNA.EF-Tu.GTP complex up to the GTP hydrolysis stage on the ribosome. The sequence is that of Elongation factor Ts from Paraburkholderia phytofirmans (strain DSM 17436 / LMG 22146 / PsJN) (Burkholderia phytofirmans).